We begin with the raw amino-acid sequence, 58 residues long: Large ribosomal subunit protein bL32 (58 aa).

Residues 1-20 (MALPKHKKSKSKRDKRRTHQ) are compositionally biased toward basic residues. The segment at 1–26 (MALPKHKKSKSKRDKRRTHQKLTAPN) is disordered.

Belongs to the bacterial ribosomal protein bL32 family.

The chain is Large ribosomal subunit protein bL32 from Desulfatibacillum aliphaticivorans.